The sequence spans 1023 residues: Sodium/potassium-transporting ATPase subunit alpha-1 (1023 aa).

The propeptide occupies 1-5 (MGKGV). Positions 1–11 (MGKGVGRDKYE) are enriched in basic and acidic residues. Residues 1–39 (MGKGVGRDKYEPAAVSEHGDKKGKKAKKERDMDELKKEV) are disordered. Residues 6–96 (GRDKYEPAAV…PEWVKFCRQL (91 aa)) lie on the Cytoplasmic side of the membrane. Lys9 carries the post-translational modification N6-acetyllysine. Tyr10 carries the phosphotyrosine modification. Ser16 is subject to Phosphoserine. Lys21 is subject to N6-acetyllysine. The segment covering 28–39 (KERDMDELKKEV) has biased composition (basic and acidic residues). A phosphoserine mark is found at Ser40 and Ser47. The tract at residues 82–84 (PPP) is phosphoinositide-3 kinase binding. Residues 97 to 117 (FGGFSMLLWIGAILCFLAYGI) traverse the membrane as a helical segment. The Extracellular portion of the chain corresponds to 118 to 129 (RSATEEEPPNDD). A helical transmembrane segment spans residues 130–150 (LYLGVVLSAVVIITGCFSYYQ). Residues 151-291 (EAKSSKIMES…TPIAEEIEHF (141 aa)) are Cytoplasmic-facing. The segment at 216–235 (SSLTGESEPQTRSPDFTNEN) is disordered. The residue at position 228 (Ser228) is a Phosphoserine. Position 260 is a phosphotyrosine (Tyr260). The chain crosses the membrane as a helical span at residues 292–312 (IHLITGVAVFLGVSFFILSLI). The Extracellular portion of the chain corresponds to 313 to 319 (LEYTWLE). Residues 320 to 340 (AVIFLIGIIVANVPEGLLATV) form a helical membrane-spanning segment. At 341-775 (TVCLTLTAKR…RLIFDNLKKS (435 aa)) the chain is on the cytoplasmic side. The active-site 4-aspartylphosphate intermediate is Asp376. Phosphoserine is present on residues Ser452 and Ser484. Residue Lys487 participates in ATP binding. A Phosphotyrosine modification is found at Tyr542. Residues 596-717 (RAAVPDAVGK…QGAIVAVTGD (122 aa)) are mediates interaction with SCN7A. Residue Lys661 is modified to N6-succinyllysine. 2 positions are modified to phosphoserine: Ser668 and Ser675. The Mg(2+) site is built by Asp717 and Asp721. Residues 776 to 798 (IAYTLTSNIPEITPFLIFIIANI) form a helical membrane-spanning segment. Residues 799–801 (PLP) lie on the Extracellular side of the membrane. A helical membrane pass occupies residues 802–824 (LGTVTILCIDLGTDMVPAISLAY). Residues 825-849 (EQAESDIMKRQPRNPKTDKLVNERL) are Cytoplasmic-facing. The chain crosses the membrane as a helical span at residues 850–872 (ISMAYGQIGMIQALGGFFTYFVI). Topologically, residues 873–915 (LAENGFLPFHLLGIRETWDDRWVNDVEDSYGQQWTYEQRKIVE) are extracellular. The helical transmembrane segment at 916–936 (FTCHTAFFVSIVVVQWADLVI) threads the bilayer. Topologically, residues 937–952 (CKTRRNSVFQQGMKNK) are cytoplasmic. Ser943 bears the Phosphoserine; by PKA mark. A helical membrane pass occupies residues 953–973 (ILIFGLFEETALAAFLSYCPG). The Extracellular segment spans residues 974–979 (MGAALR). The chain crosses the membrane as a helical span at residues 980–1000 (MYPLKPTWWFCAFPYSLLIFV). Topologically, residues 1001–1023 (YDEVRKLIIRRRPGGWVEKETYY) are cytoplasmic.

This sequence belongs to the cation transport ATPase (P-type) (TC 3.A.3) family. Type IIC subfamily. As to quaternary structure, the sodium/potassium-transporting ATPase is composed of a catalytic alpha subunit, an auxiliary non-catalytic beta subunit and an additional regulatory subunit. Interacts with regulatory subunit FXYD1. Interacts with regulatory subunit FXYD3. Interacts with SIK1. Interacts with SLC35G1 and STIM1. Interacts with CLN3; this interaction regulates the sodium/potassium-transporting ATPase complex localization at the plasma membrane. Interacts with SCN7A; activates ATP1A1 P-type sodium:potassium-exchanging transporter activity which indirectly signals to nearby neurons to regulate sodium homeostasis. Phosphorylation on Tyr-10 modulates pumping activity. Phosphorylation of Ser-943 by PKA modulates the response of ATP1A1 to PKC. Dephosphorylation by protein phosphatase 2A (PP2A) following increases in intracellular sodium, leading to increase catalytic activity.

The protein resides in the cell membrane. It localises to the basolateral cell membrane. It is found in the sarcolemma. Its subcellular location is the cell projection. The protein localises to the axon. The protein resides in the melanosome. It carries out the reaction K(+)(out) + Na(+)(in) + ATP + H2O = K(+)(in) + Na(+)(out) + ADP + phosphate + H(+). Its function is as follows. This is the catalytic component of the active enzyme, which catalyzes the hydrolysis of ATP coupled with the exchange of sodium and potassium ions across the plasma membrane. This action creates the electrochemical gradient of sodium and potassium ions, providing the energy for active transport of various nutrients. Could also be part of an osmosensory signaling pathway that senses body-fluid sodium levels and controls salt intake behavior as well as voluntary water intake to regulate sodium homeostasis. This Mus musculus (Mouse) protein is Sodium/potassium-transporting ATPase subunit alpha-1 (Atp1a1).